A 115-amino-acid chain; its full sequence is T cell receptor beta variable 12-5 (115 aa).

A signal peptide spans 1–21 (MATRLLCCVVLCLLGEELIDA). The 94-residue stretch at 22–115 (RVTQTPRHKV…SAVYFCASGL (94 aa)) folds into the Ig-like domain. C42 and C111 are joined by a disulfide.

Alpha-beta TR is a heterodimer composed of an alpha and beta chain; disulfide-linked. The alpha-beta TR is associated with the transmembrane signaling CD3 coreceptor proteins to form the TR-CD3 (TcR or TCR). The assembly of alpha-beta TR heterodimers with CD3 occurs in the endoplasmic reticulum where a single alpha-beta TR heterodimer associates with one CD3D-CD3E heterodimer, one CD3G-CD3E heterodimer and one CD247 homodimer forming a stable octameric structure. CD3D-CD3E and CD3G-CD3E heterodimers preferentially associate with TR alpha and TR beta chains, respectively. The association of the CD247 homodimer is the last step of TcR assembly in the endoplasmic reticulum and is required for transport to the cell surface.

The protein localises to the cell membrane. Its function is as follows. V region of the variable domain of T cell receptor (TR) beta chain that participates in the antigen recognition. Alpha-beta T cell receptors are antigen specific receptors which are essential to the immune response and are present on the cell surface of T lymphocytes. Recognize peptide-major histocompatibility (MH) (pMH) complexes that are displayed by antigen presenting cells (APC), a prerequisite for efficient T cell adaptive immunity against pathogens. Binding of alpha-beta TR to pMH complex initiates TR-CD3 clustering on the cell surface and intracellular activation of LCK that phosphorylates the ITAM motifs of CD3G, CD3D, CD3E and CD247 enabling the recruitment of ZAP70. In turn ZAP70 phosphorylates LAT, which recruits numerous signaling molecules to form the LAT signalosome. The LAT signalosome propagates signal branching to three major signaling pathways, the calcium, the mitogen-activated protein kinase (MAPK) kinase and the nuclear factor NF-kappa-B (NF-kB) pathways, leading to the mobilization of transcription factors that are critical for gene expression and essential for T cell growth and differentiation. The T cell repertoire is generated in the thymus, by V-(D)-J rearrangement. This repertoire is then shaped by intrathymic selection events to generate a peripheral T cell pool of self-MH restricted, non-autoaggressive T cells. Post-thymic interaction of alpha-beta TR with the pMH complexes shapes TR structural and functional avidity. The sequence is that of T cell receptor beta variable 12-5 from Homo sapiens (Human).